A 176-amino-acid polypeptide reads, in one-letter code: Protein MAL2 (176 aa).

Residues 1–34 (MSAGGASVPPPPNPAVSFPPPRVTLPAGPDILRT) are Cytoplasmic-facing. One can recognise an MARVEL domain in the interval 31 to 175 (ILRTYSGAFV…SLGLALRRWR (145 aa)). A helical transmembrane segment spans residues 35–55 (YSGAFVCLEILFGGLVWILVA). At 56-66 (SSNVPLPLLQG) the chain is on the lumenal side. A helical membrane pass occupies residues 67–87 (WVMFVSVTAFFFSLLFLGMFL). Residues 88 to 102 (SGMVAQIDANWNFLD) lie on the Cytoplasmic side of the membrane. The helical transmembrane segment at 103–123 (FAYHFTVFVFYFGAFLLEAAA) threads the bilayer. Residues 124–149 (TSLHDLHCNTTITGQPLLSDNQYNIN) are Lumenal-facing. An N-linked (GlcNAc...) asparagine glycan is attached at asparagine 132. A helical transmembrane segment spans residues 150 to 170 (VAASIFAFMTTACYGCSLGLA). The Cytoplasmic segment spans residues 171 to 176 (LRRWRP).

The protein belongs to the MAL family. Interacts with TPD52L2. In terms of tissue distribution, predominantly expressed in kidney, lung, and liver. Also found in thyroid gland, stomach and, at lower levels in testis and small intestine.

The protein localises to the cell membrane. It is found in the apical cell membrane. The protein resides in the endomembrane system. It localises to the cytoplasm. Its subcellular location is the perinuclear region. Functionally, member of the machinery of polarized transport. Required for the indirect transcytotic route at the step of the egress of the transcytosing cargo from perinuclear endosomes in order for it to travel to the apical surface via a raft-dependent pathway. This Homo sapiens (Human) protein is Protein MAL2 (MAL2).